We begin with the raw amino-acid sequence, 435 residues long: NADH-quinone oxidoreductase subunit D (435 aa).

Belongs to the complex I 49 kDa subunit family. In terms of assembly, NDH-1 is composed of 14 different subunits. Subunits NuoB, C, D, E, F, and G constitute the peripheral sector of the complex.

It is found in the cell membrane. The enzyme catalyses a quinone + NADH + 5 H(+)(in) = a quinol + NAD(+) + 4 H(+)(out). In terms of biological role, NDH-1 shuttles electrons from NADH, via FMN and iron-sulfur (Fe-S) centers, to quinones in the respiratory chain. The immediate electron acceptor for the enzyme in this species is believed to be ubiquinone. Couples the redox reaction to proton translocation (for every two electrons transferred, four hydrogen ions are translocated across the cytoplasmic membrane), and thus conserves the redox energy in a proton gradient. This is NADH-quinone oxidoreductase subunit D from Stenotrophomonas maltophilia (strain K279a).